Consider the following 204-residue polypeptide: Nascent polypeptide-associated complex subunit alpha (204 aa).

Residues 1–19 (MADPRVEELPDEEVPKTNV) are compositionally biased toward basic and acidic residues. Disordered regions lie at residues 1-48 (MADP…HSRN) and 119-167 (LAAA…GLEA). A compositionally biased stretch (acidic residues) spans 22–32 (AGSDSESEAGE). Positions 46–111 (SRNEKKARKA…AKIEDLNSQA (66 aa)) constitute an NAC-A/B domain. Residues 119 to 128 (LAAAEAAAGE) are compositionally biased toward low complexity. The segment covering 129–151 (HAGHDHDHDHGKGKAPETEAKKE) has biased composition (basic and acidic residues). Residues 152-164 (EEEDDGEEVDETG) are compositionally biased toward acidic residues. Residues 165 to 204 (LEAKDIELVMAQANVSRKKAVKALRENDNDIVNSIMALSI) form the UBA domain.

Belongs to the NAC-alpha family. In terms of assembly, part of the nascent polypeptide-associated complex (NAC), consisting of egd2 and egd1. NAC associates with ribosomes via egd1.

It is found in the cytoplasm. The protein resides in the nucleus. In terms of biological role, component of the nascent polypeptide-associated complex (NAC), a dynamic component of the ribosomal exit tunnel, protecting the emerging polypeptides from interaction with other cytoplasmic proteins to ensure appropriate nascent protein targeting. The NAC complex also promotes mitochondrial protein import by enhancing productive ribosome interactions with the outer mitochondrial membrane and blocks the inappropriate interaction of ribosomes translating non-secretory nascent polypeptides with translocation sites in the membrane of the endoplasmic reticulum. Egd2 may also be involved in transcription regulation. The protein is Nascent polypeptide-associated complex subunit alpha (egd2) of Aspergillus clavatus (strain ATCC 1007 / CBS 513.65 / DSM 816 / NCTC 3887 / NRRL 1 / QM 1276 / 107).